The primary structure comprises 75 residues: Putative membrane protein insertion efficiency factor (75 aa).

Belongs to the UPF0161 family.

It localises to the cell inner membrane. In terms of biological role, could be involved in insertion of integral membrane proteins into the membrane. The chain is Putative membrane protein insertion efficiency factor from Gloeothece citriformis (strain PCC 7424) (Cyanothece sp. (strain PCC 7424)).